Reading from the N-terminus, the 205-residue chain is Small ribosomal subunit protein mS26 (205 aa).

Residues 1–27 constitute a mitochondrion transit peptide; that stretch reads MLRALSRLGAGTPCRPRAPLVLPARGR.

The protein belongs to the mitochondrion-specific ribosomal protein mS26 family. As to quaternary structure, component of the mitochondrial small ribosomal subunit (mt-SSU). Mature mammalian 55S mitochondrial ribosomes consist of a small (28S) and a large (39S) subunit. The 28S small subunit contains a 12S ribosomal RNA (12S mt-rRNA) and 30 different proteins. The 39S large subunit contains a 16S rRNA (16S mt-rRNA), a copy of mitochondrial valine transfer RNA (mt-tRNA(Val)), which plays an integral structural role, and 52 different proteins.

The protein localises to the mitochondrion. This is Small ribosomal subunit protein mS26 (MRPS26) from Homo sapiens (Human).